The chain runs to 292 residues: Bifunctional protein FolD (292 aa).

NADP(+)-binding positions include 165–167, serine 190, and threonine 231; that span reads GRS.

The protein belongs to the tetrahydrofolate dehydrogenase/cyclohydrolase family. As to quaternary structure, homodimer.

The catalysed reaction is (6R)-5,10-methylene-5,6,7,8-tetrahydrofolate + NADP(+) = (6R)-5,10-methenyltetrahydrofolate + NADPH. It catalyses the reaction (6R)-5,10-methenyltetrahydrofolate + H2O = (6R)-10-formyltetrahydrofolate + H(+). Its pathway is one-carbon metabolism; tetrahydrofolate interconversion. Catalyzes the oxidation of 5,10-methylenetetrahydrofolate to 5,10-methenyltetrahydrofolate and then the hydrolysis of 5,10-methenyltetrahydrofolate to 10-formyltetrahydrofolate. The chain is Bifunctional protein FolD from Arthrobacter globiformis.